A 378-amino-acid polypeptide reads, in one-letter code: Acetylornithine deacetylase (378 aa).

Zn(2+) is bound at residue histidine 76. Aspartate 78 is an active-site residue. Aspartate 108 lines the Zn(2+) pocket. The active site involves glutamate 140. Zn(2+) contacts are provided by glutamate 141, glutamate 165, and histidine 351.

This sequence belongs to the peptidase M20A family. ArgE subfamily. In terms of assembly, homodimer. It depends on Zn(2+) as a cofactor. Co(2+) is required as a cofactor. The cofactor is glutathione.

The protein resides in the cytoplasm. It catalyses the reaction N(2)-acetyl-L-ornithine + H2O = L-ornithine + acetate. Its pathway is amino-acid biosynthesis; L-arginine biosynthesis; L-ornithine from N(2)-acetyl-L-ornithine (linear): step 1/1. Functionally, catalyzes the hydrolysis of the amide bond of N(2)-acetylated L-amino acids. Cleaves the acetyl group from N-acetyl-L-ornithine to form L-ornithine, an intermediate in L-arginine biosynthesis pathway, and a branchpoint in the synthesis of polyamines. The chain is Acetylornithine deacetylase from Vibrio atlanticus (strain LGP32) (Vibrio splendidus (strain Mel32)).